The chain runs to 61 residues: Large ribosomal subunit protein bL28 (61 aa).

A disordered region spans residues 1–26; the sequence is MAKDFLNGKRTHFGNKRSHALNSSRR. Residues 9–19 are compositionally biased toward basic residues; the sequence is KRTHFGNKRSH.

This sequence belongs to the bacterial ribosomal protein bL28 family.

In Levilactobacillus brevis (strain ATCC 367 / BCRC 12310 / CIP 105137 / JCM 1170 / LMG 11437 / NCIMB 947 / NCTC 947) (Lactobacillus brevis), this protein is Large ribosomal subunit protein bL28.